We begin with the raw amino-acid sequence, 272 residues long: MAAKVFESIGKFGLALAVAGGVVNSALYNVDAGHRAVIFDRFRGVQDIVVGEGTHFLIPWVQKPIIFDCRSRPRNVPVITGSKDLQNVNITLRILFRPVASQLPRIYTSIGEDYDERVLPSITTEILKSVVARFDAGELITQRELVSRQVSDDLTERAATFGLILDDVSLTHLTFGKEFTEAVEAKQVAQQEAERARFVVEKAEQQKKAAIISAEGDSKAAELIANSLATAGDGLIELRKLEAAEDIAYQLSRSRNITYLPAGQSVLLQLPQ.

Ala2 is subject to N-acetylalanine. Thr91 is subject to Phosphothreonine. Lys128 and Lys186 each carry N6-acetyllysine. Residues 177–211 adopt a coiled-coil conformation; sequence KEFTEAVEAKQVAQQEAERARFVVEKAEQQKKAAI. Lys202 is subject to N6-acetyllysine; alternate. At Lys202 the chain carries N6-succinyllysine; alternate. Residue Tyr249 is modified to Phosphotyrosine.

This sequence belongs to the prohibitin family. As to quaternary structure, interacts with PHB2. Interacts with STOML2. Interacts with CD86 (via cytoplasmic domain); the interactions increases after priming with CD40. In terms of assembly, (Microbial infection) Interacts with human enterovirus 71/EV-71 capsid protein VP0, protein 3CD and protease 3C. In terms of tissue distribution, widely expressed in different tissues.

The protein resides in the mitochondrion inner membrane. It localises to the nucleus. It is found in the cell membrane. The protein localises to the cytoplasm. With respect to regulation, target of the anti-cancer drug Rocaglamide (Roc-A). Functionally, protein with pleiotropic attributes mediated in a cell-compartment- and tissue-specific manner, which include the plasma membrane-associated cell signaling functions, mitochondrial chaperone, and transcriptional co-regulator of transcription factors in the nucleus. Plays a role in adipose tissue and glucose homeostasis in a sex-specific manner. Contributes to pulmonary vascular remodeling by accelerating proliferation of pulmonary arterial smooth muscle cells. In the mitochondria, together with PHB2, forms large ring complexes (prohibitin complexes) in the inner mitochondrial membrane (IMM) and functions as a chaperone protein that stabilizes mitochondrial respiratory enzymes and maintains mitochondrial integrity in the IMM, which is required for mitochondrial morphogenesis, neuronal survival, and normal lifespan. The prohibitin complex, with DNAJC19, regulates cardiolipin remodeling and the protein turnover of OMA1 in a cardiolipin-binding manner. Regulates mitochondrial respiration activity playing a role in cellular aging. The prohibitin complex plays a role of mitophagy receptor involved in targeting mitochondria for autophagic degradation. Involved in mitochondrial-mediated antiviral innate immunity, activates RIG-I-mediated signal transduction and production of IFNB1 and pro-inflammatory cytokine IL6. In terms of biological role, in the nucleus, acts as a transcription coregulator, enhances promoter binding by TP53, a transcription factor it activates, but reduces the promoter binding by E2F1, a transcription factor it represses. Interacts with STAT3 to affect IL17 secretion in T-helper Th17 cells. Its function is as follows. In the plasma membrane, cooperates with CD86 to mediate CD86-signaling in B lymphocytes that regulates the level of IgG1 produced through the activation of distal signaling intermediates. Upon CD40 engagement, required to activate NF-kappa-B signaling pathway via phospholipase C and protein kinase C activation. Functionally, (Microbial infection) In neuronal cells, cell surface-expressed PHB1 is involved in human enterovirus 71/EV-71 entry into neuronal cells specifically, while membrane-bound mitochondrial PHB1 associates with the virus replication complex and facilitates viral replication. May serve as a receptor for EV71. The polypeptide is Prohibitin 1 (Phb1) (Mus musculus (Mouse)).